The sequence spans 239 residues: Transcriptional regulatory protein DcuR (239 aa).

Residues Asn3 to Arg121 form the Response regulatory domain. Asp56 carries the 4-aspartylphosphate modification. A DNA-binding region (H-T-H motif) is located at residues Thr181–Ile200.

Post-translationally, phosphorylated and activated by DcuS.

Its subcellular location is the cytoplasm. In terms of biological role, member of the two-component regulatory system DcuR/DcuS. Involved in the C4-dicarboxylate-stimulated regulation of the genes encoding the anaerobic fumarate respiratory system (frdABCD; nuoAN; dcuB; dcuC; sdhCDAB; etc.). Weakly regulates the aerobic C4-dicarboxylate transporter dctA. The chain is Transcriptional regulatory protein DcuR (dcuR) from Escherichia coli O6:H1 (strain CFT073 / ATCC 700928 / UPEC).